A 98-amino-acid chain; its full sequence is Defensin-A (98 aa).

Positions 1 to 18 (MKSITVICFLALCTVAIT) are cleaved as a signal peptide. The propeptide occupies 19–58 (SAYPQEPVLADEARPFANSLFDELPEETYQAAVENFRLKR). Intrachain disulfides connect C61–C88, C74–C94, and C78–C96.

The protein belongs to the invertebrate defensin family. Type 1 subfamily.

It is found in the secreted. Its function is as follows. Antibacterial peptide mostly active against Gram-positive bacteria. Has activity against the bacteria Gram-negative E.cloacae beta12. This Aedes aegypti (Yellowfever mosquito) protein is Defensin-A (DEFA).